A 707-amino-acid chain; its full sequence is Toxin RTX-I translocation ATP-binding protein (707 aa).

Residues 1–125 form the Peptidase C39 domain; it reads MDFYREEDYG…SLYQGKLILV (125 aa). The active site involves His83. An ABC transmembrane type-1 domain is found at 154–436; the sequence is FIETLIVSIF…LAQLWQDFQQ (283 aa). Helical transmembrane passes span 158–178, 188–208, 295–315, 387–407, and 410–430; these read LIVS…FQVV, FSTL…EIVL, LVIL…SPIL, VVMV…DLSI, and LIAF…LAQL. In terms of domain architecture, ABC transporter spans 468-703; the sequence is ITFRNIRFRY…PNGLYHYLHQ (236 aa). ATP is bound at residue 502–509; sequence GRSGSGKS.

This sequence belongs to the ABC transporter superfamily. Protein-1 exporter (TC 3.A.1.109) family. Homodimer.

Its subcellular location is the cell membrane. In terms of biological role, involved in the transport of the toxin RTX-I as well as that of RTX-II. The sequence is that of Toxin RTX-I translocation ATP-binding protein (apxIB) from Actinobacillus pleuropneumoniae (Haemophilus pleuropneumoniae).